Consider the following 75-residue polypeptide: Translational regulator CsrA (75 aa).

It belongs to the CsrA/RsmA family. In terms of assembly, homodimer; the beta-strands of each monomer intercalate to form a hydrophobic core, while the alpha-helices form wings that extend away from the core.

Its subcellular location is the cytoplasm. Functionally, a translational regulator that binds mRNA to regulate translation initiation and/or mRNA stability. Usually binds in the 5'-UTR at or near the Shine-Dalgarno sequence preventing ribosome-binding, thus repressing translation. Its main target seems to be the major flagellin gene, while its function is anatagonized by FliW. The sequence is that of Translational regulator CsrA from Exiguobacterium sibiricum (strain DSM 17290 / CCUG 55495 / CIP 109462 / JCM 13490 / 255-15).